We begin with the raw amino-acid sequence, 106 residues long: UPF0060 membrane protein Smed_0659 (106 aa).

The next 3 helical transmembrane spans lie at 4–24, 31–51, and 61–81; these read FAIY…FWAW, GLWL…LTMV, and AAYG…AEGA.

The protein belongs to the UPF0060 family.

Its subcellular location is the cell inner membrane. In Sinorhizobium medicae (strain WSM419) (Ensifer medicae), this protein is UPF0060 membrane protein Smed_0659.